The chain runs to 962 residues: Atromentin synthetase nps3 (962 aa).

The tract at residues 55–469 (FISSSAHDSS…SGRIKDTVIV (415 aa)) is adenylation (A) domain. The Carrier domain occupies 601 to 679 (VPATITETAF…DLAKYIDALV (79 aa)). The segment at 606-676 (TETAFAKIFA…VLRDLAKYID (71 aa)) is thiolation and peptide carrier (T) domain. S638 is modified (O-(pantetheine 4'-phosphoryl)serine). The interval 702 to 805 (PIFFVHPGVG…VGLINIPPHI (104 aa)) is thioesterase (TE) domain.

It belongs to the ATP-dependent AMP-binding enzyme family.

Its pathway is secondary metabolite biosynthesis. Its function is as follows. An L-tyrosine:2-oxoglutarate aminotransferase (probably amt1) and atromentin synthetase nps3 catalyze consecutive steps to turn over L-tyrosine into atromentin, which represents the generic precursor molecule for the entire terphenylquinone and pulvinic acid family of pigments, which are widely distributed secondary metabolites in homobasidiomycetes. The first step catalyzed by the aminotransferase converts L-tyrosine in to 4-hydroxyphenylpyruvate (4-HPP). Adenylation of two 4-HPP monomers by the nps3 adenylation (A) domain, covalent tethering of the monomers as a thioester and oxoester onto the nps3 thiolation (T) and thioesterase (TE) domains, respectively, and symmetric C-C-bond formation between two monomers catalyzed by the nps3 TE domain leads to atromentin. Follow-up products of atromentin in S.lacrymans include atromentic acid, xerocomic acid, isoxerocomic acid and variegatic acid. The protein is Atromentin synthetase nps3 (nps3) of Serpula lacrymans var. lacrymans (strain S7.9) (Dry rot fungus).